We begin with the raw amino-acid sequence, 317 residues long: Ferrochelatase (317 aa).

The Fe cation site is built by histidine 192 and glutamate 271.

This sequence belongs to the ferrochelatase family.

The protein resides in the cytoplasm. It carries out the reaction heme b + 2 H(+) = protoporphyrin IX + Fe(2+). Its pathway is porphyrin-containing compound metabolism; protoheme biosynthesis; protoheme from protoporphyrin-IX: step 1/1. Catalyzes the ferrous insertion into protoporphyrin IX. The polypeptide is Ferrochelatase (Citrifermentans bemidjiense (strain ATCC BAA-1014 / DSM 16622 / JCM 12645 / Bem) (Geobacter bemidjiensis)).